The following is a 361-amino-acid chain: Glycerophosphodiester phosphodiesterase GDPD1, chloroplastic (361 aa).

The transit peptide at 1–53 (MSLKAIHVSEVPSLDHFPENPSLICSSRKANNKFVVVGHRGHGMNMSQSPDLR) directs the protein to the chloroplast. Positions 54 to 323 (FSALKENSIL…DHVEEITEAV (270 aa)) constitute a GP-PDE domain.

This sequence belongs to the glycerophosphoryl diester phosphodiesterase family. Requires Mg(2+) as cofactor. Expressed in roots, shoots, rosette leaves, stems, flowers and siliques.

The protein localises to the plastid. The protein resides in the chloroplast. The catalysed reaction is a sn-glycero-3-phosphodiester + H2O = an alcohol + sn-glycerol 3-phosphate + H(+). Functionally, hydrolyzes glycerolphosphoglycerol, glycerophosphocholine and glycerophosphoethanolamine in vitro. May be involved in release of inorganic phosphate (Pi) from phospholipids during Pi starvation. The chain is Glycerophosphodiester phosphodiesterase GDPD1, chloroplastic from Arabidopsis thaliana (Mouse-ear cress).